We begin with the raw amino-acid sequence, 928 residues long: Chitin synthase 2 (928 aa).

Disordered stretches follow at residues 1–45 (MAYN…EAYA) and 110–179 (AYYT…SPAP). Over residues 17–28 (PSAQPQYDSRSP) the composition is skewed to polar residues. Over residues 130-140 (PSHDEPYRPDT) the composition is skewed to basic and acidic residues. The next 9 membrane-spanning stretches (helical) occupy residues 472–492 (SAFGFISVLPGAFCAYRYVAL), 570–589 (WLNGSFFAAVYAVAHVYQLW), 613–633 (LFAWFAIGNFFLVFRLLTASL), 644–664 (TVLGVVFEFVYLGTLLYCFIL), 678–698 (MMMVIFWSVLMVWLTFASIFL), 723–743 (FFGLIVSLASTYVLWFVASFL), 753–773 (CFLQYIVLTPTYINVLNIYAF), 854–874 (VTAWMITNFILVAAVLNIAGF), and 893–913 (VILWSVAGLSLFRFTGACWFL).

The protein belongs to the chitin synthase family. Class I subfamily.

The protein localises to the cell membrane. The enzyme catalyses [(1-&gt;4)-N-acetyl-beta-D-glucosaminyl](n) + UDP-N-acetyl-alpha-D-glucosamine = [(1-&gt;4)-N-acetyl-beta-D-glucosaminyl](n+1) + UDP + H(+). Its function is as follows. Polymerizes chitin, a structural polymer of the cell wall and septum, by transferring the sugar moiety of UDP-GlcNAc to the non-reducing end of the growing chitin polymer. CHS2 plays a synergistic role to CHS1 in normal yeast cell reproductive growth, even if this role is less predominant than for CHS1. With CHS3, plays an important role in virulence. This is Chitin synthase 2 from Exophiala dermatitidis (Black yeast-like fungus).